The chain runs to 626 residues: LGDVPGTSGAIFVARPESNYPDRFGLFGAPPLEEGYVILVGDGRLKRFPPPSEFLLSVWSRSRAARPVCCSIVLCCFCLTVFLYLSENMGQTATTPLSLTLDHWKDVERTAHNQSVEVRKRRWVTFCSAEWPTFNVGWPRDGTFNPDIITQVKIKVFSPGPHGHPDQVPYIVTWEALAVDPPPWVKPFVHPKPPLLLPPSAPSLPPEPPLSTPPQSSLYPALTSPLNTKPRPQVLPDSGGPLIDLLTEDPPPYRDPGPPSPDGKGDSGEVAPTEGAPDSSPMVSRLRGRREPPVADSTTSQAFPLRLGGNGQFQYWPFSSSDLYNWKNNNPSFSEDPGKLTALIESVLLTHQPTWDDCQQLLGTLLTGEEKQRVLLEARKAVRGEDGRPTQLPNDINDAFPLERPDWDYNTQRGRNHLVHYRQLLLAGLQNAGRSPTNLAKVKGITQGPNESPSAFLERLKEAYRRYTPYDPEDPGQETNVSMSFIWQSAPDIGRKLERLEDLKNKTLGDLVREAEKIFNKRETPEEREERVRRETEEKEERRRAEDERREKERDRRRHREMSKLLATVVSGQRQDRQGGERRRPQLDHDQCAYCKEKGHWARDCPKKPRGPRGPRPQASLLTLDD.

Topologically, residues 1–67 (LGDVPGTSGA…VWSRSRAARP (67 aa)) are cytoplasmic. The helical transmembrane segment at 68–86 (VCCSIVLCCFCLTVFLYLS) threads the bilayer. Residues 87 to 626 (ENMGQTATTP…PQASLLTLDD (540 aa)) are Extracellular-facing. N-linked (GlcNAc...) asparagine; by host glycosylation occurs at asparagine 113. Pro residues-rich tracts occupy residues 199–212 (PSAPSLPPEPPLST) and 249–261 (DPPPYRDPGPPSP). The disordered stretch occupies residues 199–306 (PSAPSLPPEP…STTSQAFPLR (108 aa)). The N-linked (GlcNAc...) asparagine; by host glycan is linked to asparagine 480. Basic and acidic residues-rich tracts occupy residues 522–554 (RETPEEREERVRRETEEKEERRRAEDERREKER) and 574–607 (RQDRQGGERRRPQLDHDQCAYCKEKGHWARDCPK). The tract at residues 522–626 (RETPEEREER…PQASLLTLDD (105 aa)) is disordered. The segment at 590–607 (DQCAYCKEKGHWARDCPK) adopts a CCHC-type zinc-finger fold.

Glycosylated by host. In terms of processing, cleaved by host near the middle of the molecule, releasing the c-terminal half containing capsid and nucleoprotein domains op GAG.

It localises to the host cell membrane. Functionally, plays a role in viral particle release. Presumably acts by facilitating the fission of the virion bud at the cell surface. May prevent the antiviral activity of murine APOBEC3. This chain is Glyco-Gag protein, found in Mus musculus (Mouse).